Here is a 628-residue protein sequence, read N- to C-terminus: 1-deoxy-D-xylulose-5-phosphate synthase (628 aa).

Residues histidine 72 and 113-115 contribute to the thiamine diphosphate site; that span reads GHS. Aspartate 144 is a binding site for Mg(2+). Thiamine diphosphate is bound by residues 145–146, asparagine 173, tyrosine 284, and glutamate 366; that span reads GA. Asparagine 173 is a Mg(2+) binding site.

Belongs to the transketolase family. DXPS subfamily. Homodimer. It depends on Mg(2+) as a cofactor. Requires thiamine diphosphate as cofactor.

The enzyme catalyses D-glyceraldehyde 3-phosphate + pyruvate + H(+) = 1-deoxy-D-xylulose 5-phosphate + CO2. Its pathway is metabolic intermediate biosynthesis; 1-deoxy-D-xylulose 5-phosphate biosynthesis; 1-deoxy-D-xylulose 5-phosphate from D-glyceraldehyde 3-phosphate and pyruvate: step 1/1. Functionally, catalyzes the acyloin condensation reaction between C atoms 2 and 3 of pyruvate and glyceraldehyde 3-phosphate to yield 1-deoxy-D-xylulose-5-phosphate (DXP). This is 1-deoxy-D-xylulose-5-phosphate synthase from Shouchella clausii (strain KSM-K16) (Alkalihalobacillus clausii).